The following is a 314-amino-acid chain: MLRIYAPASSANISVGFDTLGAAISPIDGSLLGDVVQIEDIPAGFELESAGYFVRKLPKEPQKNIVYQAYVLFSERLKLRNGHVKPLRLTLEKNMPIGSGLGSSACSIVAALVALNMFHNEPFSKMELLEMMGELEGRISGSIHYDNVAPCYLGGVQLMVQSLGNICQQLPFFDSWYWVLAYPGIEVSTAEARAILPKSYTRQDVIAHGRHLGSFVHACHTQQDVLAALMMKDVIAEPYRESLLPNFAEVKQASRDLGALATGISGSGPTIFSIAPDLAVATKLANYLENHYLQNNEGFVHICKVDNQGTRALG.

Pro-96–Cys-106 contributes to the ATP binding site.

Belongs to the GHMP kinase family. Homoserine kinase subfamily.

The protein resides in the cytoplasm. It catalyses the reaction L-homoserine + ATP = O-phospho-L-homoserine + ADP + H(+). Its pathway is amino-acid biosynthesis; L-threonine biosynthesis; L-threonine from L-aspartate: step 4/5. Catalyzes the ATP-dependent phosphorylation of L-homoserine to L-homoserine phosphate. The protein is Homoserine kinase of Mannheimia succiniciproducens (strain KCTC 0769BP / MBEL55E).